Reading from the N-terminus, the 380-residue chain is Cytochrome b (380 aa).

The next 4 helical transmembrane spans lie at Phe34–Met54, Trp78–Ile99, Trp114–Leu134, and Phe179–Thr199. Heme b-binding residues include His84 and His98. Residues His183 and His197 each contribute to the heme b site. His202 serves as a coordination point for a ubiquinone. Helical transmembrane passes span Leu227–Ser247, Leu289–His309, Leu321–Ser341, and Phe348–Pro368.

Belongs to the cytochrome b family. The cytochrome bc1 complex contains 11 subunits: 3 respiratory subunits (MT-CYB, CYC1 and UQCRFS1), 2 core proteins (UQCRC1 and UQCRC2) and 6 low-molecular weight proteins (UQCRH/QCR6, UQCRB/QCR7, UQCRQ/QCR8, UQCR10/QCR9, UQCR11/QCR10 and a cleavage product of UQCRFS1). This cytochrome bc1 complex then forms a dimer. It depends on heme b as a cofactor.

The protein resides in the mitochondrion inner membrane. Its function is as follows. Component of the ubiquinol-cytochrome c reductase complex (complex III or cytochrome b-c1 complex) that is part of the mitochondrial respiratory chain. The b-c1 complex mediates electron transfer from ubiquinol to cytochrome c. Contributes to the generation of a proton gradient across the mitochondrial membrane that is then used for ATP synthesis. In Halobaena caerulea (Blue petrel), this protein is Cytochrome b (MT-CYB).